A 131-amino-acid polypeptide reads, in one-letter code: Holo-[acyl-carrier-protein] synthase (131 aa).

Mg(2+) contacts are provided by D8 and E63.

It belongs to the P-Pant transferase superfamily. AcpS family. The cofactor is Mg(2+).

Its subcellular location is the cytoplasm. It carries out the reaction apo-[ACP] + CoA = holo-[ACP] + adenosine 3',5'-bisphosphate + H(+). Transfers the 4'-phosphopantetheine moiety from coenzyme A to a Ser of acyl-carrier-protein. The protein is Holo-[acyl-carrier-protein] synthase of Shewanella halifaxensis (strain HAW-EB4).